Consider the following 466-residue polypeptide: MAKSPAARKGXPPVAVAVTAALALLIALLSPGVAQAAGLTATVTKESSWDNGYSASVTVRNDTSSTVSQWEVVLTLPGGTTVAQVWNAQHTSSGNSHTFTGVSWNSTIPPGGTASSGFIASGSGEPTHCTINGAPCDEGSEPGGPGGPGTPSPDPGTQPGTGTPVERYGKVQVCGTQLCDEHGNPVQLRGMSTHGIQWFDHCLTDSSLDALAYDWKADIIRLSMYIQEDGYETNPRGFTDRMHQLIDMATARGLYVIVDWHILTPGDPHYNLDRAKTFFAEIAQRHASKTNVLYEIANEPNGVSWASIKSYAEEVIPVIRQRDPDSVIIVGTRGWSSLGVSEGSGPAEIAANPVNASNIMYAFHFYAASHRDNYLNALREASELFPVFVTEFGTETYTGDGANDFQMADRYIDLMAERKIGWTKWNYSDDFRSGAVFQPGTCASGGPWSGSSLKASGQWVRSKLQS.

An N-terminal signal peptide occupies residues 1–36; that stretch reads MAKSPAARKGXPPVAVAVTAALALLIALLSPGVAQA. A CBM2 domain is found at 37–139; the sequence is AGLTATVTKE…TINGAPCDEG (103 aa). A disordered region spans residues 129–166; it reads CTINGAPCDEGSEPGGPGGPGTPSPDPGTQPGTGTPVE. Glutamate 299 acts as the Proton donor in catalysis. Glutamate 391 functions as the Nucleophile in the catalytic mechanism.

It belongs to the glycosyl hydrolase 5 (cellulase A) family.

The enzyme catalyses Endohydrolysis of (1-&gt;4)-beta-D-glucosidic linkages in cellulose, lichenin and cereal beta-D-glucans.. Its pathway is glycan metabolism; cellulose degradation. This Thermobifida fusca (Thermomonospora fusca) protein is Endoglucanase E-5 (celE).